Consider the following 184-residue polypeptide: Inner membrane-spanning protein YciB (184 aa).

Transmembrane regions (helical) follow at residues 19-39 (LVGI…QLLI), 52-72 (LFMG…NQLE), 76-96 (WKVT…QYGF), 123-143 (LGWA…SQYL), and 151-171 (FKTF…GIYI).

It belongs to the YciB family.

Its subcellular location is the cell inner membrane. In terms of biological role, plays a role in cell envelope biogenesis, maintenance of cell envelope integrity and membrane homeostasis. This chain is Inner membrane-spanning protein YciB, found in Pasteurella multocida (strain Pm70).